A 451-amino-acid chain; its full sequence is UPF0210 protein NMCC_1554 (451 aa).

The protein belongs to the UPF0210 family. As to quaternary structure, homodimer.

In Neisseria meningitidis serogroup C (strain 053442), this protein is UPF0210 protein NMCC_1554.